The primary structure comprises 285 residues: Eukaryotic translation initiation factor 2 subunit beta (285 aa).

The interval 30 to 69 (DAAVNGKENGSGDDLFAGLKKKKKKSKSVSADAEAEKEPT) is disordered. The residue at position 40 (Ser-40) is a Phosphoserine. Thr-69 is subject to Phosphothreonine. A phosphoserine mark is found at Ser-80, Ser-92, and Ser-112. Thr-116 carries the phosphothreonine modification. Residue Ser-118 is modified to Phosphoserine. A C4-type zinc finger spans residues 236–262 (CKTCKSINTELKREQSNRLFFMVCKSC).

Belongs to the eIF-2-beta/eIF-5 family. As to quaternary structure, eukaryotic translation initiation factor 2 eIF2 is a heterotrimeric complex composed of an alpha, a beta and a gamma subunit. The factors eIF-1, eIF-2, eIF-3, TIF5/eIF-5 and methionyl-tRNAi form a multifactor complex (MFC) that may bind to the 40S ribosome. Interacts with GCD6. Interacts with GCD1. Interacts with TIF5/eIF-5. Interacts with CDC123.

Its subcellular location is the cytoplasm. The protein localises to the cytosol. Its function is as follows. Component of the eIF2 complex that functions in the early steps of protein synthesis by forming a ternary complex with GTP and initiator tRNA. This complex binds to a 40S ribosomal subunit, followed by mRNA binding to form a 43S pre-initiation complex (43S PIC). Junction of the 60S ribosomal subunit to form the 80S initiation complex is preceded by hydrolysis of the GTP bound to eIF2 and release of an eIF2-GDP binary complex. In order for eIF2 to recycle and catalyze another round of initiation, the GDP bound to eIF2 must exchange with GTP by way of a reaction catalyzed by eIF2B. The protein is Eukaryotic translation initiation factor 2 subunit beta (SUI3) of Saccharomyces cerevisiae (strain ATCC 204508 / S288c) (Baker's yeast).